The primary structure comprises 344 residues: Uroporphyrinogen decarboxylase (344 aa).

Residues 23-27 (RQAGR), aspartate 73, tyrosine 149, threonine 204, and histidine 321 each bind substrate.

It belongs to the uroporphyrinogen decarboxylase family. As to quaternary structure, homodimer.

The protein localises to the cytoplasm. It catalyses the reaction uroporphyrinogen III + 4 H(+) = coproporphyrinogen III + 4 CO2. Its pathway is porphyrin-containing compound metabolism; protoporphyrin-IX biosynthesis; coproporphyrinogen-III from 5-aminolevulinate: step 4/4. Functionally, catalyzes the decarboxylation of four acetate groups of uroporphyrinogen-III to yield coproporphyrinogen-III. The sequence is that of Uroporphyrinogen decarboxylase from Francisella philomiragia subsp. philomiragia (strain ATCC 25017 / CCUG 19701 / FSC 153 / O#319-036).